The sequence spans 97 residues: MEAPAERALPRLQALARPPPPISYEEELYDCLDYYYLRDFPACGAGRSKGRTRREQALRTNWPAPGGHERKVAQKLLNGQRKRRQRQLHPKMRTRLT.

A disordered region spans residues 76–97 (LLNGQRKRRQRQLHPKMRTRLT). The span at 80–97 (QRKRRQRQLHPKMRTRLT) shows a compositional bias: basic residues.

It belongs to the NUPR family.

It localises to the nucleus. In terms of biological role, acts as a transcriptional repressor by inhibiting gene expression at the NUPR1 promoter in a p53/TP53-dependent manner in cancer cells. Involved in the G1 cell cycle arrest, and in a decrease in cell viability and cell proliferation. Plays a role as a negative regulator of the protumoral factor NUPR1. The protein is Nuclear protein 2 of Homo sapiens (Human).